Consider the following 295-residue polypeptide: Lipase 2 (295 aa).

Positions 1–31 (MPKPALRRVMTATVAAVGTLALGLTDATAHA) are cleaved as a signal peptide. S48 (nucleophile) is an active-site residue. 3 disulfides stabilise this stretch: C65-C89, C138-C152, and C205-C254. Residue H275 is part of the active site.

The protein belongs to the 'GDSL' lipolytic enzyme family. As to quaternary structure, monomer.

Its subcellular location is the secreted. The enzyme catalyses a triacylglycerol + H2O = a diacylglycerol + a fatty acid + H(+). Strongly inhibited by Ag(+). The cations Ca(2+) and Mg(2+) do not significantly reduce the lipolytic activity of SCO7513, whereas high concentrations of Co(2+) and Cu(2+) partially inhibit it. Is not inhibited by DTT in vitro. Is resistant to PMSF inhibition, except in the presence of Ca(2+). Its function is as follows. Catalyzes the hydrolysis of fatty acid esters with a preference for long chain fatty acids (C16-C18). The sequence is that of Lipase 2 from Streptomyces coelicolor (strain ATCC BAA-471 / A3(2) / M145).